A 239-amino-acid polypeptide reads, in one-letter code: Increased recombination centers protein 22-2 (239 aa).

An N-terminal signal peptide occupies residues 1–19 (MKLSTIFTAFAATIATVAG). Over 20–161 (YETTGSKQTV…AAVSFFDPRL (142 aa)) the chain is Lumenal. Residues 162 to 182 (IFLELVLLITFAGLIYVGYEI) form a helical membrane-spanning segment. At 183-239 (WGKQYFKGVAPVKAKKVSAAKASSPVASGPSTTSATGYDTNWIPESHLKQKKTKKVN) the chain is on the cytoplasmic side. Positions 201 to 213 (AAKASSPVASGPS) are enriched in low complexity. Positions 201 to 222 (AAKASSPVASGPSTTSATGYDT) are disordered.

The protein belongs to the IRC22 family.

It localises to the endoplasmic reticulum membrane. Functionally, is probably involved in a pathway contributing to genomic integrity. The polypeptide is Increased recombination centers protein 22-2 (IRC22-2) (Candida albicans (strain WO-1) (Yeast)).